Here is a 196-residue protein sequence, read N- to C-terminus: dTTP/UTP pyrophosphatase (196 aa).

The Proton acceptor role is filled by aspartate 73.

Belongs to the Maf family. YhdE subfamily. Requires a divalent metal cation as cofactor.

The protein localises to the cytoplasm. It catalyses the reaction dTTP + H2O = dTMP + diphosphate + H(+). It carries out the reaction UTP + H2O = UMP + diphosphate + H(+). Functionally, nucleoside triphosphate pyrophosphatase that hydrolyzes dTTP and UTP. May have a dual role in cell division arrest and in preventing the incorporation of modified nucleotides into cellular nucleic acids. The polypeptide is dTTP/UTP pyrophosphatase (Myxococcus xanthus (strain DK1622)).